Consider the following 241-residue polypeptide: Corrinoid adenosyltransferase MMAB (241 aa).

The N-terminal 26 residues, 1–26 (MAVWGPGGRLGLRGCLGARKLLCPRF), are a transit peptide targeting the mitochondrion. The segment at 27–69 (QSRGPQGVEDGDRPQPSSKTPKVPKIYTKTGDKGFSSTFTGER) is disordered. Residues 54-63 (TKTGDKGFSS) and Lys72 each bind ATP. Ser128 is modified (phosphoserine). Residue 184-188 (RRAER) participates in ATP binding. Residue Lys205 is modified to N6-succinyllysine. Asn208 contributes to the ATP binding site. Position 224 is an N6-acetyllysine; alternate (Lys224). Position 224 is an N6-succinyllysine; alternate (Lys224).

This sequence belongs to the Cob(I)alamin adenosyltransferase family. As to quaternary structure, homotrimer.

The protein resides in the mitochondrion. It catalyses the reaction cob(I)alamin-[corrinoid adenosyltransferase] + ATP = apo-[corrinoid adenosyltransferase] + adenosylcob(III)alamin + triphosphate. Converts cob(I)alamin to adenosylcobalamin (adenosylcob(III)alamin), a coenzyme for methylmalonyl-CoA mutase, therefore participates in the final step of the vitamin B12 conversion. Generates adenosylcobalamin (AdoCbl) and directly delivers the cofactor to MUT in a transfer that is stimulated by ATP-binding to MMAB and gated by MMAA. This is Corrinoid adenosyltransferase MMAB from Bos taurus (Bovine).